Here is a 215-residue protein sequence, read N- to C-terminus: Cytochrome b6 (215 aa).

Residues 32–52 (IFYCLGGITLTCFLIQVATGF) form a helical membrane-spanning segment. Cys35 is a heme c binding site. His86 and His100 together coordinate heme b. Helical transmembrane passes span 90-110 (ASMM…TGGF), 116-136 (LTWV…VTGY), and 186-206 (LHTF…FLMI). Residues His187 and His202 each coordinate heme b.

This sequence belongs to the cytochrome b family. PetB subfamily. The 4 large subunits of the cytochrome b6-f complex are cytochrome b6, subunit IV (17 kDa polypeptide, PetD), cytochrome f and the Rieske protein, while the 4 small subunits are PetG, PetL, PetM and PetN. The complex functions as a dimer. The cofactor is heme b. Heme c is required as a cofactor.

It is found in the plastid. Its subcellular location is the chloroplast thylakoid membrane. In terms of biological role, component of the cytochrome b6-f complex, which mediates electron transfer between photosystem II (PSII) and photosystem I (PSI), cyclic electron flow around PSI, and state transitions. This Spirogyra maxima (Green alga) protein is Cytochrome b6.